The sequence spans 415 residues: Tyrosine--tRNA ligase (415 aa).

Tyr-34 contacts L-tyrosine. The short motif at 39-48 is the 'HIGH' region element; sequence PTSDSLTVGH. Residues Tyr-164 and Gln-168 each contribute to the L-tyrosine site. The short motif at 225–229 is the 'KMSKS' region element; it reads KFGKS. Residue Lys-228 coordinates ATP. In terms of domain architecture, S4 RNA-binding spans 348 to 414; it reads IPLSEALVKT…GKKNNSLIIL (67 aa).

This sequence belongs to the class-I aminoacyl-tRNA synthetase family. TyrS type 1 subfamily. As to quaternary structure, homodimer.

Its subcellular location is the cytoplasm. It catalyses the reaction tRNA(Tyr) + L-tyrosine + ATP = L-tyrosyl-tRNA(Tyr) + AMP + diphosphate + H(+). Its function is as follows. Catalyzes the attachment of tyrosine to tRNA(Tyr) in a two-step reaction: tyrosine is first activated by ATP to form Tyr-AMP and then transferred to the acceptor end of tRNA(Tyr). This chain is Tyrosine--tRNA ligase, found in Phytoplasma australiense.